A 273-amino-acid polypeptide reads, in one-letter code: Imidazole glycerol phosphate synthase subunit HisF (273 aa).

Catalysis depends on residues Asp-11 and Asp-134.

The protein belongs to the HisA/HisF family. As to quaternary structure, heterodimer of HisH and HisF.

The protein localises to the cytoplasm. The enzyme catalyses 5-[(5-phospho-1-deoxy-D-ribulos-1-ylimino)methylamino]-1-(5-phospho-beta-D-ribosyl)imidazole-4-carboxamide + L-glutamine = D-erythro-1-(imidazol-4-yl)glycerol 3-phosphate + 5-amino-1-(5-phospho-beta-D-ribosyl)imidazole-4-carboxamide + L-glutamate + H(+). It functions in the pathway amino-acid biosynthesis; L-histidine biosynthesis; L-histidine from 5-phospho-alpha-D-ribose 1-diphosphate: step 5/9. Its function is as follows. IGPS catalyzes the conversion of PRFAR and glutamine to IGP, AICAR and glutamate. The HisF subunit catalyzes the cyclization activity that produces IGP and AICAR from PRFAR using the ammonia provided by the HisH subunit. The polypeptide is Imidazole glycerol phosphate synthase subunit HisF (Methanococcoides burtonii (strain DSM 6242 / NBRC 107633 / OCM 468 / ACE-M)).